The following is a 613-amino-acid chain: Kelch-like protein 21 (613 aa).

The BTB domain occupies 38-105 (FDVTLCAEGK…CYTGRVTVTH (68 aa)). One can recognise a BACK domain in the interval 140–242 (CLEIQDFAEA…RRFYLLAHVE (103 aa)). Kelch repeat units follow at residues 289 to 337 (ILVV…ALGN), 338 to 384 (DIYV…VLKG), 386 to 424 (LYVV…ACRG), 426 to 472 (LYAI…TLNG), 474 to 514 (IYFV…ALGG), and 515 to 562 (RLYV…SIFR).

Component of the BCR(KLHL21) E3 ubiquitin ligase complex, at least composed of cul3, klhl21 and rbx1.

Its subcellular location is the cytoplasm. The protein resides in the cytoskeleton. It is found in the spindle. The protein operates within protein modification; protein ubiquitination. In terms of biological role, substrate-specific adapter of BCR (BTB-CUL3-RBX1) E3 ubiquitin-protein ligase complex required for efficient chromosome alignment and cytokinesis. The BCR(KLHL21) E3 ubiquitin ligase complex regulates localization of the chromosomal passenger complex (CPC) from chromosomes to the spindle midzone in anaphase and mediates the ubiquitination of AURKB. This chain is Kelch-like protein 21 (klhl21), found in Danio rerio (Zebrafish).